A 358-amino-acid polypeptide reads, in one-letter code: Heme A synthase 1 (358 aa).

5 consecutive transmembrane segments (helical) span residues 11 to 31 (LVGTWLLVICFMIFGMVVGGG), 98 to 117 (WGRLMAVVFLVPLAVFRLRG), 123 to 143 (LTAWLLFLFGLGAGEATMGWY), 159 to 179 (LYLGPHFVLAMLIFTAMLWTA), and 199 to 219 (LLSVSIGLIIATIGLGALVAA). His-262 is a heme binding site. Helical transmembrane passes span 264–284 (VAATVTAIVVVIAAAMGLRAP), 292–312 (LFLLLAGLVSLQYILGMSTLV), and 315–335 (MAELGYVHELNAVLLLAACIA). Position 322 (His-322) interacts with heme.

This sequence belongs to the COX15/CtaA family. Type 2 subfamily. In terms of assembly, interacts with CtaB. It depends on heme b as a cofactor.

It is found in the cell membrane. The enzyme catalyses Fe(II)-heme o + 2 A + H2O = Fe(II)-heme a + 2 AH2. It participates in porphyrin-containing compound metabolism; heme A biosynthesis; heme A from heme O: step 1/1. Its function is as follows. Catalyzes the conversion of heme O to heme A by two successive hydroxylations of the methyl group at C8. The first hydroxylation forms heme I, the second hydroxylation results in an unstable dihydroxymethyl group, which spontaneously dehydrates, resulting in the formyl group of heme A. In Acidiphilium cryptum (strain JF-5), this protein is Heme A synthase 1.